The primary structure comprises 408 residues: Aminopeptidase T (408 aa).

6 residues coordinate a divalent metal cation: glutamate 250, glutamate 316, glutamate 340, histidine 345, histidine 376, and aspartate 378.

It belongs to the peptidase M29 family. Homodimer. It depends on Co(2+) as a cofactor. The cofactor is Zn(2+). Requires Mg(2+) as cofactor.

In terms of biological role, metal-dependent exopeptidase. The polypeptide is Aminopeptidase T (Thermus thermophilus (strain ATCC 27634 / DSM 579 / HB8)).